We begin with the raw amino-acid sequence, 585 residues long: YTH domain-containing family protein 3 (585 aa).

Disordered stretches follow at residues methionine 1–proline 51, lysine 244–glycine 277, and proline 304–leucine 350. Serine 2 carries the post-translational modification N-acetylserine. The segment covering asparagine 15 to isoleucine 24 has biased composition (polar residues). Serine 23 bears the Phosphoserine mark. Positions lysine 244 to proline 254 are enriched in basic residues. Residues glutamine 329–leucine 350 are compositionally biased toward low complexity. Residues glycine 416 to isoleucine 550 form the YTH domain. Residues lysine 422–tyrosine 424, aspartate 428, tryptophan 438–cysteine 439, asparagine 468, tryptophan 492, and tryptophan 497 each bind RNA.

The protein belongs to the YTHDF family. YTHDF3 subfamily. As to quaternary structure, interacts with CNOT1; promoting recruitment of the CCR4-NOT complex. Interacts with YTHDF1. Interacts with YTHDF2. Interacts with PAN3.

The protein resides in the cytoplasm. It is found in the cytosol. It localises to the P-body. The protein localises to the stress granule. In terms of biological role, specifically recognizes and binds N6-methyladenosine (m6A)-containing RNAs, and regulates their stability. M6A is a modification present at internal sites of mRNAs and some non-coding RNAs and plays a role in mRNA stability and processing. Acts as a regulator of mRNA stability by promoting degradation of m6A-containing mRNAs via interaction with the CCR4-NOT complex or PAN3. The YTHDF paralogs (YTHDF1, YTHDF2 and YTHDF3) share m6A-containing mRNAs targets and act redundantly to mediate mRNA degradation and cellular differentiation. Acts as a negative regulator of type I interferon response by down-regulating interferon-stimulated genes (ISGs) expression: acts by binding to FOXO3 mRNAs. Binds to FOXO3 mRNAs independently of METTL3-mediated m6A modification. Can also act as a regulator of mRNA stability in cooperation with YTHDF2 by binding to m6A-containing mRNA and promoting their degradation. Recognizes and binds m6A-containing circular RNAs (circRNAs); circRNAs are generated through back-splicing of pre-mRNAs, a non-canonical splicing process promoted by dsRNA structures across circularizing exons. Promotes formation of phase-separated membraneless compartments, such as P-bodies or stress granules, by undergoing liquid-liquid phase separation upon binding to mRNAs containing multiple m6A-modified residues: polymethylated mRNAs act as a multivalent scaffold for the binding of YTHDF proteins, juxtaposing their disordered regions and thereby leading to phase separation. The resulting mRNA-YTHDF complexes then partition into different endogenous phase-separated membraneless compartments, such as P-bodies, stress granules or neuronal RNA granules. May also recognize and bind N1-methyladenosine (m1A)-containing mRNAs: inhibits trophoblast invasion by binding to m1A-methylated transcripts of IGF1R, promoting their degradation. This is YTH domain-containing family protein 3 from Mus musculus (Mouse).